The primary structure comprises 454 residues: MRNCCRERGFSVGCLEPETSFSCASDVKPSPDMDSVSSQDSLYLPNSIGASLQDQDLWSQFHQEGTEMIITKSGRRMFPQCKIRLFGLHLYAKYMLLVDFVPLDNFRYKWNKNQWEAAGKAEPHPPCRTYVHPDSPASGAHWMKDPICFQKLKLTNNTLDQQGHIILHSMHRYKPRFHVVQSDDMYNSPWGLVQVFSFPETEFTAVTAYQNEKITKLKINHNPFAKGFREQERSHKRDDVLRTLQQSPGKRQKRKKWEDSPEADISDFPKATRVKEESVMDPAVVYQNWVSDHEANQGLTPHSPESEGVNQEQQVPTSSLNFYNKSQHRSSQHLSSPYDLGEPSSRRLTPDVATVPDSDQDSLAVLHGIPTQDSAQERTCSMNISMETPVKQPLRGTIYSSYGTEQWMVPAQGQYQPVGYTAYQTDLSTQGAVAHQHSGMSDWSQYSLFPYSCW.

A DNA-binding region (T-box) is located at residues 57–230; it reads LWSQFHQEGT…HNPFAKGFRE (174 aa). Residues 229–241 show a composition bias toward basic and acidic residues; sequence REQERSHKRDDVL. Disordered stretches follow at residues 229–274 and 295–358; these read REQE…ATRV and ANQG…VPDS. Residues 308–325 show a composition bias toward polar residues; the sequence is GVNQEQQVPTSSLNFYNK.

As to quaternary structure, forms a repression complex on the promoters of the nodal/nr1 and siamois genes with the maternal factors tcf7l1/tcf3 and pouf5.1/oct-25. Interacts (via C-terminus) with tcf7l1/tcf3 (via N-terminus). Also interacts with the other POU-domain transcription factors pou5f1.2/oct-91 and pou5f1.3/oct-60.

Its subcellular location is the nucleus. Functionally, transcription factor required for both mesoderm and endoderm formation in the embryo; signaling determinants and concentration levels may determine which germ layer is formed. Acts together with beta-catenin to activate genes that are responsible for mesoderm induction including wnt-8, eomes t/bra, siamois, mix1 and sox17. Directly binds to promoter DNA. Patterns the mesoderm along the dorsoventral and posterior axis. Activates siamois gene transcription when alone or in combination with beta-catenin, but inhibits siamois transcription in combination with pou5f1.1/oct-25. This chain is T-box protein VegT, found in Xenopus borealis (Kenyan clawed frog).